The sequence spans 419 residues: MLSSFPVVLLETMSHYTDEPRFTIEQIDLLQRLRRTGMTKHEILHALETLDRLDQEHSDKFGRRSSYGGSSYGNSTNNVPASSSTATASTQTQHSGMSPSPSNSYDTSPLPCTTNQNGRENNDRLSTSNGKMSPSRYHANSMGQRSYSFEASEEDLDVDDKVEELMRRDSSVIKEEIKAFLANRRISQAVVAQVTGISQSRISHWLLQQGSDLSEQKKRAFYRWYQLEKTNPGATLSMRPAPIPIEDPEWRQTPPPVSATPGTFRLRRGSRFTWRKECLAVMESYFNENQYPDEAKREEIANACNAVIQKPGKKLSDLERVTSLKVYNWFANRRKEIKRRANIAAILESHGIDVQSPGGHSNSDDVDGNDYSEQDDSTSHSDHQDPISLAVEMAAVNHTILALARQGANEIKTEALDDD.

One can recognise an HNF-p1 domain in the interval 18–49 (DEPRFTIEQIDLLQRLRRTGMTKHEILHALET). The tract at residues 56–152 (EHSDKFGRRS…GQRSYSFEAS (97 aa)) is disordered. A Glycyl lysine isopeptide (Lys-Gly) (interchain with G-Cter in SUMO2) cross-link involves residue lysine 60. 2 stretches are compositionally biased toward low complexity: residues 64–73 (RSSYGGSSYG) and 81–93 (ASSS…TQTQ). Residues 94–132 (HSGMSPSPSNSYDTSPLPCTTNQNGRENNDRLSTSNGKM) are compositionally biased toward polar residues. Lysine 131 participates in a covalent cross-link: Glycyl lysine isopeptide (Lys-Gly) (interchain with G-Cter in SUMO2). A POU-specific atypical domain is found at 145–241 (RSYSFEASEE…PGATLSMRPA (97 aa)). Serine 148 bears the Phosphoserine mark. Lysine 161 is covalently cross-linked (Glycyl lysine isopeptide (Lys-Gly) (interchain with G-Cter in SUMO2)). Serine 170 is modified (phosphoserine). Glycyl lysine isopeptide (Lys-Gly) (interchain with G-Cter in SUMO2) cross-links involve residues lysine 174, lysine 217, and lysine 310. The homeobox DNA-binding region spans 267–341 (RRGSRFTWRK…NRRKEIKRRA (75 aa)). The interval 352–384 (IDVQSPGGHSNSDDVDGNDYSEQDDSTSHSDHQ) is disordered. Over residues 364–376 (DDVDGNDYSEQDD) the composition is skewed to acidic residues. Residue lysine 412 forms a Glycyl lysine isopeptide (Lys-Gly) (interchain with G-Cter in SUMO1); alternate linkage. Lysine 412 is covalently cross-linked (Glycyl lysine isopeptide (Lys-Gly) (interchain with G-Cter in SUMO2); alternate).

In terms of assembly, associates with the telomerase holoenzyme complex. Interacts with DKC1, XRCC6 and COIL.

Its subcellular location is the nucleus. It localises to the cytoplasm. It is found in the chromosome. The protein resides in the telomere. The protein localises to the cajal body. Its subcellular location is the PML body. In terms of biological role, binds directly to 5'-TTAGGG-3' repeats in telomeric DNA. Associates with the telomerase complex at sites of active telomere processing and positively regulates telomere elongation. Important for TERT binding to chromatin, indicating a role in recruitment of the telomerase complex to telomeres. Also plays a role in the alternative lengthening of telomeres (ALT) pathway in telomerase-negative cells where it promotes formation and/or maintenance of ALT-associated promyelocytic leukemia bodies (APBs). Enhances formation of telomere C-circles in ALT cells, suggesting a possible role in telomere recombination. Might also be involved in the DNA damage response at telomeres. This Mus musculus (Mouse) protein is Homeobox-containing protein 1 (Hmbox1).